Reading from the N-terminus, the 494-residue chain is Cytochrome P450 2A8 (494 aa).

Cysteine 439 contacts heme.

It belongs to the cytochrome P450 family. Heme serves as cofactor. As to expression, liver.

Its subcellular location is the endoplasmic reticulum membrane. The protein resides in the microsome membrane. The enzyme catalyses an organic molecule + reduced [NADPH--hemoprotein reductase] + O2 = an alcohol + oxidized [NADPH--hemoprotein reductase] + H2O + H(+). In terms of biological role, highly active in 7-ethoxycoumarin O-deethylation, and benzphetamine N-demethylation; moderately active in testosterone 7-alpha-hydroxylation, ethylmorphine N-demethylation, p-nitroanisole O-demethylation; and only slightly active in benzopyrene 3-hydroxylation, 7-ethoxyresorufin O-deethylation, testosterone 2-alpha-hydroxylation and testosterone 17-oxidation. Competent in the metabolic activation of aflatoxin B1. The polypeptide is Cytochrome P450 2A8 (CYP2A8) (Mesocricetus auratus (Golden hamster)).